A 507-amino-acid polypeptide reads, in one-letter code: Dolichyl pyrophosphate Man9GlcNAc2 alpha-1,3-glucosyltransferase (507 aa).

Residues 1-3 (MEK) lie on the Cytoplasmic side of the membrane. The helical transmembrane segment at 4-24 (WYLMTVVVLIGLTVRWTVSLN) threads the bilayer. Over 25 to 114 (SYSGAGKPPM…SQAHKLFMRT (90 aa)) the chain is Lumenal. Asn59 carries an N-linked (GlcNAc...) asparagine glycan. A helical membrane pass occupies residues 115-135 (TVLIADLLIYIPAVVLYCCCL). Residues 136–143 (KEISTKKK) are Cytoplasmic-facing. A helical membrane pass occupies residues 144–164 (IANALCILLYPGLILIDYGHF). Residues 165-172 (QYNSVSLG) are Lumenal-facing. A helical membrane pass occupies residues 173–193 (FALWGVLGISCDCDLLGSLAF). At 194–226 (CLAINYKQMELYHALPFFCFLLGKCFKKGLKGK) the chain is on the cytoplasmic side. Residues 227-247 (GFVLLVKLACIVVASFVLCWL) traverse the membrane as a helical segment. The Lumenal portion of the chain corresponds to 248–297 (PFFTEREQTLQVLRRLFPVDRGLFEDKVANIWCSFNVFLKIKDILPRHIQ). A helical transmembrane segment spans residues 298–318 (LIMSFCFTFLSLLPACIKLIL). Residues 319–323 (QPSSK) are Cytoplasmic-facing. Residues 324–344 (GFKFTLVSCALSFFLFSFQVH) form a helical membrane-spanning segment. The Lumenal segment spans residues 345–361 (EKSILLVSLPVCLVLSE). The helical transmembrane segment at 362–382 (IPFMSTWFLLVSTFSMLPLLL) threads the bilayer. Residues 383–387 (KDELL) lie on the Cytoplasmic side of the membrane. A helical transmembrane segment spans residues 388–408 (MPSVVTTMAFFIACVTSFSIF). Residues 409-437 (EKTSEEELQLKSFSISVRKYLPCFTFLSR) are Lumenal-facing. The chain crosses the membrane as a helical span at residues 438–458 (IIQYLFLISVITMVLLTLMTV). At 459–473 (TLGPPQKLPDLFSVL) the chain is on the cytoplasmic side. A helical membrane pass occupies residues 474–494 (VCFVSCLNFLFFLVYFNIIIV). Over 495–507 (WDSKSGRNQKKIS) the chain is Lumenal.

It belongs to the ALG6/ALG8 glucosyltransferase family.

The protein resides in the endoplasmic reticulum membrane. The enzyme catalyses an alpha-D-Man-(1-&gt;2)-alpha-D-Man-(1-&gt;2)-alpha-D-Man-(1-&gt;3)-[alpha-D-Man-(1-&gt;2)-alpha-D-Man-(1-&gt;3)-[alpha-D-Man-(1-&gt;2)-alpha-D-Man-(1-&gt;6)]-alpha-D-Man-(1-&gt;6)]-beta-D-Man-(1-&gt;4)-beta-D-GlcNAc-(1-&gt;4)-alpha-D-GlcNAc-diphospho-di-trans,poly-cis-dolichol + a di-trans,poly-cis-dolichyl beta-D-glucosyl phosphate = an alpha-D-Glc-(1-&gt;3)-alpha-D-Man-(1-&gt;2)-alpha-D-Man-(1-&gt;2)-alpha-D-Man-(1-&gt;3)-[alpha-D-Man-(1-&gt;2)-alpha-D-Man-(1-&gt;3)-[alpha-D-Man-(1-&gt;2)-alpha-D-Man-(1-&gt;6)]-alpha-D-Man-(1-&gt;6)]-beta-D-Man-(1-&gt;4)-beta-D-GlcNAc-(1-&gt;4)-alpha-D-GlcNAc-diphospho-di-trans,poly-cis-dolichol + a di-trans,poly-cis-dolichyl phosphate + H(+). It participates in protein modification; protein glycosylation. In terms of biological role, dolichyl pyrophosphate Man9GlcNAc2 alpha-1,3-glucosyltransferase that operates in the biosynthetic pathway of dolichol-linked oligosaccharides, the glycan precursors employed in protein asparagine (N)-glycosylation. The assembly of dolichol-linked oligosaccharides begins on the cytosolic side of the endoplasmic reticulum membrane and finishes in its lumen. The sequential addition of sugars to dolichol pyrophosphate produces dolichol-linked oligosaccharides containing fourteen sugars, including two GlcNAcs, nine mannoses and three glucoses. Once assembled, the oligosaccharide is transferred from the lipid to nascent proteins by oligosaccharyltransferases. In the lumen of the endoplasmic reticulum, adds the first glucose residue from dolichyl phosphate glucose (Dol-P-Glc) onto the lipid-linked oligosaccharide intermediate Man(9)GlcNAc(2)-PP-Dol to produce Glc(1)Man(9)GlcNAc(2)-PP-Dol. Glc(1)Man(9)GlcNAc(2)-PP-Dol is a substrate for ALG8, the following enzyme in the biosynthetic pathway. In Pongo abelii (Sumatran orangutan), this protein is Dolichyl pyrophosphate Man9GlcNAc2 alpha-1,3-glucosyltransferase.